We begin with the raw amino-acid sequence, 299 residues long: Probable arylamine N-acetyltransferase 2 (299 aa).

Cys-75 serves as the catalytic Acyl-thioester intermediate. Catalysis depends on residues His-115 and Asp-130.

Belongs to the arylamine N-acetyltransferase family.

It catalyses the reaction an arylamine + acetyl-CoA = an N-acetylarylamine + CoA. The chain is Probable arylamine N-acetyltransferase 2 from Dictyostelium discoideum (Social amoeba).